The chain runs to 278 residues: Ribosomal RNA small subunit methyltransferase A (278 aa).

Positions 18, 20, 45, 66, 89, and 110 each coordinate S-adenosyl-L-methionine.

The protein belongs to the class I-like SAM-binding methyltransferase superfamily. rRNA adenine N(6)-methyltransferase family. RsmA subfamily.

Its subcellular location is the cytoplasm. The catalysed reaction is adenosine(1518)/adenosine(1519) in 16S rRNA + 4 S-adenosyl-L-methionine = N(6)-dimethyladenosine(1518)/N(6)-dimethyladenosine(1519) in 16S rRNA + 4 S-adenosyl-L-homocysteine + 4 H(+). Its function is as follows. Specifically dimethylates two adjacent adenosines (A1518 and A1519) in the loop of a conserved hairpin near the 3'-end of 16S rRNA in the 30S particle. May play a critical role in biogenesis of 30S subunits. This is Ribosomal RNA small subunit methyltransferase A from Cupriavidus pinatubonensis (strain JMP 134 / LMG 1197) (Cupriavidus necator (strain JMP 134)).